A 310-amino-acid polypeptide reads, in one-letter code: Tryptophan 2,3-dioxygenase (310 aa).

The disordered stretch occupies residues 1–39; the sequence is MQPPGNDAPAGCPFSGARAQGTQAAHEAPHVPGDAGEQA. Residues 79 to 83, Y141, and R145 each bind substrate; that span reads FIIQH. H268 is a heme binding site. Substrate is bound at residue T282.

The protein belongs to the tryptophan 2,3-dioxygenase family. Homotetramer. Heme is required as a cofactor.

It carries out the reaction L-tryptophan + O2 = N-formyl-L-kynurenine. It participates in amino-acid degradation; L-tryptophan degradation via kynurenine pathway; L-kynurenine from L-tryptophan: step 1/2. In terms of biological role, heme-dependent dioxygenase that catalyzes the oxidative cleavage of the L-tryptophan (L-Trp) pyrrole ring and converts L-tryptophan to N-formyl-L-kynurenine. Catalyzes the oxidative cleavage of the indole moiety. The sequence is that of Tryptophan 2,3-dioxygenase from Burkholderia multivorans (strain ATCC 17616 / 249).